Reading from the N-terminus, the 602-residue chain is Elongation factor 4 (602 aa).

Residues 7 to 189 (SKIRNFCIIA…AVVSRIPHPQ (183 aa)) form the tr-type G domain. Residues 19-24 (DHGKST) and 136-139 (NKVD) each bind GTP.

This sequence belongs to the TRAFAC class translation factor GTPase superfamily. Classic translation factor GTPase family. LepA subfamily.

It localises to the cell inner membrane. The catalysed reaction is GTP + H2O = GDP + phosphate + H(+). In terms of biological role, required for accurate and efficient protein synthesis under certain stress conditions. May act as a fidelity factor of the translation reaction, by catalyzing a one-codon backward translocation of tRNAs on improperly translocated ribosomes. Back-translocation proceeds from a post-translocation (POST) complex to a pre-translocation (PRE) complex, thus giving elongation factor G a second chance to translocate the tRNAs correctly. Binds to ribosomes in a GTP-dependent manner. The polypeptide is Elongation factor 4 (Prochlorococcus marinus subsp. pastoris (strain CCMP1986 / NIES-2087 / MED4)).